The following is a 261-amino-acid chain: Triosephosphate isomerase (261 aa).

10–12 (NWK) lines the substrate pocket. His-100 serves as the catalytic Electrophile. Catalysis depends on Glu-172, which acts as the Proton acceptor. Substrate is bound by residues Gly-178, Ser-218, and 239–240 (GG).

Belongs to the triosephosphate isomerase family. Homodimer.

The protein localises to the cytoplasm. The catalysed reaction is D-glyceraldehyde 3-phosphate = dihydroxyacetone phosphate. It participates in carbohydrate biosynthesis; gluconeogenesis. It functions in the pathway carbohydrate degradation; glycolysis; D-glyceraldehyde 3-phosphate from glycerone phosphate: step 1/1. Its function is as follows. Involved in the gluconeogenesis. Catalyzes stereospecifically the conversion of dihydroxyacetone phosphate (DHAP) to D-glyceraldehyde-3-phosphate (G3P). The chain is Triosephosphate isomerase from Saccharopolyspora erythraea (strain ATCC 11635 / DSM 40517 / JCM 4748 / NBRC 13426 / NCIMB 8594 / NRRL 2338).